The primary structure comprises 378 residues: Glutamate 5-kinase (378 aa).

Lys20 contacts ATP. The substrate site is built by Ser60, Asp147, and Asn159. Residues 179–180 and 221–227 contribute to the ATP site; these read TD and TGGMLTK. The PUA domain occupies 286–364; it reads RGRVVLDDGA…SQIARILGSM (79 aa).

It belongs to the glutamate 5-kinase family.

Its subcellular location is the cytoplasm. It carries out the reaction L-glutamate + ATP = L-glutamyl 5-phosphate + ADP. The protein operates within amino-acid biosynthesis; L-proline biosynthesis; L-glutamate 5-semialdehyde from L-glutamate: step 1/2. Its function is as follows. Catalyzes the transfer of a phosphate group to glutamate to form L-glutamate 5-phosphate. This Bordetella pertussis (strain Tohama I / ATCC BAA-589 / NCTC 13251) protein is Glutamate 5-kinase.